Reading from the N-terminus, the 994-residue chain is Regulator of telomere elongation helicase 1 homolog (994 aa).

The region spanning 15 to 324 (SKTSIKFPFE…KLIENLRTED (310 aa)) is the Helicase ATP-binding domain. 50-57 (SPTGTGKT) contributes to the ATP binding site. [4Fe-4S] cluster is bound by residues Cys142, Cys160, Cys169, and Cys208. The DEAH box motif lies at 251–254 (DEAH). The span at 818 to 831 (KIEKKEKIEPRPIK) shows a compositional bias: basic and acidic residues. Residues 818–896 (KIEKKEKIEP…HVVSGSEPPK (79 aa)) are disordered. The segment covering 833–844 (DSSSSSVFSLPT) has biased composition (polar residues). The segment covering 847–856 (DELKVKKWEQ) has biased composition (basic and acidic residues). 2 stretches are compositionally biased toward polar residues: residues 859–869 (DSQTNVSSSSD) and 880–889 (PGNSSGQHVV).

The protein belongs to the helicase family. RAD3/XPD subfamily.

The protein resides in the nucleus. It catalyses the reaction ATP + H2O = ADP + phosphate + H(+). Functionally, a probable ATP-dependent DNA helicase implicated in DNA repair and the maintenance of genomic stability. Acts as an anti-recombinase to counteract toxic recombination and limit crossover during meiosis. Regulates meiotic recombination and crossover homeostasis by physically dissociating strand invasion events and thereby promotes noncrossover repair by meiotic synthesis dependent strand annealing (SDSA) as well as disassembly of D loop recombination intermediates. This chain is Regulator of telomere elongation helicase 1 homolog, found in Caenorhabditis briggsae.